The chain runs to 128 residues: Azurin (128 aa).

Residues 1–128 enclose the Plastocyanin-like domain; the sequence is ACDVSIEGND…IMKGTIELGS (128 aa). A disulfide bridge links Cys-2 with Cys-25. 4 residues coordinate Cu cation: His-45, Cys-111, His-116, and Met-120.

In terms of assembly, monomer. Interacts with the AAUA/AAUB heterotetramer complex. It depends on Cu cation as a cofactor.

The protein resides in the periplasm. Functionally, transfers electrons from cytochrome c551 to cytochrome oxidase. Transfers electrons from the tryptophan tryptophylquinone of the aromatic amine dehydrogenase heterotetramer. The polypeptide is Azurin (Alcaligenes faecalis).